Here is a 362-residue protein sequence, read N- to C-terminus: MGMLVPTALAARLLSLFQQQLGSLWSGLAILFCWLRIALGWLDPGKEQPQVRGEPEDTQETQEDGNSTQPTTPVSVNYHFTRQCNYKCGFCFHTAKTSFVLPLEEAKRGLLLLKQAGLEKINFSGGEPFLQDRGEYLGKLVRFCKEELALPSVSIVSNGSLIRERWFKDYGEYLDILAISCDSFDEQVNALIGRGQGKKNHVENLQKLRRWCRDYKVAFKINSVINRFNVDEDMNEHIKALSPVRWKVFQCLLIEGENSGEDALREAERFLISNEEFETFLERHKEVSCLVPESNQKMKDSYLILDEYMRFLNCTGGRKDPSKSILDVGVEEAIKFSGFDEKMFLKRGGKYVWSKADLKLDW.

Residues 47–73 are disordered; it reads EQPQVRGEPEDTQETQEDGNSTQPTTP. The segment covering 64–73 has biased composition (polar residues); the sequence is DGNSTQPTTP. A Radical SAM core domain is found at 70 to 290; that stretch reads PTTPVSVNYH…LERHKEVSCL (221 aa). The [4Fe-4S] cluster site is built by Cys-84, Cys-88, and Cys-91. An N6-acetyllysine modification is found at Lys-198. Lys-207 is covalently cross-linked (Glycyl lysine isopeptide (Lys-Gly) (interchain with G-Cter in ubiquitin)).

It belongs to the radical SAM superfamily. RSAD2 family. As to quaternary structure, homodimer. Interacts with IRAK1 and TRAF6. Interacts with FPPS. Interacts with HADHB. Interacts (via C-terminus) with VAPA/VAP33 (via C-terminus). The cofactor is [4Fe-4S] cluster. Acetylated by HAT1. HAT1-mediated acetylation of Lys-198 in turn recruits UBE4A that stimulates RSAD2 polyubiquitination leading to proteasomal degradation. Post-translationally, 'Lys-6'-linked polyubiquitination at Lys-207 leads to RSAD2 protein degradation. As to expression, expressed at higher levels in atherosclerotic arteries than in normal arteries.

It localises to the endoplasmic reticulum membrane. It is found in the golgi apparatus. The protein localises to the endoplasmic reticulum. Its subcellular location is the lipid droplet. The protein resides in the mitochondrion. It localises to the mitochondrion inner membrane. It is found in the mitochondrion outer membrane. It carries out the reaction CTP + AH2 + S-adenosyl-L-methionine = 3'-deoxy-3',4'-didehydro-CTP + 5'-deoxyadenosine + L-methionine + A + H2O + H(+). IRAK1 and TRAF6 synergistically activate RSAD2 increasing its activity with CTP as substrate about 10-fold. Its function is as follows. Interferon-inducible antiviral protein which plays a major role in the cell antiviral state induced by type I and type II interferon. Catalyzes the conversion of cytidine triphosphate (CTP) to 3'-deoxy-3',4'-didehydro-CTP (ddhCTP) via a SAM-dependent radical mechanism. In turn, ddhCTP acts as a chain terminator for the RNA-dependent RNA polymerases from multiple viruses and directly inhibits viral replication. Therefore, inhibits a wide range of DNA and RNA viruses. Also promotes TLR7 and TLR9-dependent production of IFN-beta production in plasmacytoid dendritic cells (pDCs) by facilitating 'Lys-63'-linked ubiquitination of IRAK1 by TRAF6. Plays a role in CD4+ T-cells activation and differentiation. Facilitates T-cell receptor (TCR)-mediated GATA3 activation and optimal T-helper 2 (Th2) cytokine production by modulating NFKB1 and JUNB activities. Can inhibit secretion of soluble proteins. In Mus musculus (Mouse), this protein is S-adenosylmethionine-dependent nucleotide dehydratase RSAD2.